We begin with the raw amino-acid sequence, 440 residues long: 3-phosphoshikimate 1-carboxyvinyltransferase (440 aa).

Positions 29 and 34 each coordinate 3-phosphoshikimate. Residue Lys29 participates in phosphoenolpyruvate binding. Gly99 and Arg128 together coordinate phosphoenolpyruvate. Residues Ser171, Ser172, Gln173, Ser199, Asp316, and Lys343 each coordinate 3-phosphoshikimate. Gln173 provides a ligand contact to phosphoenolpyruvate. Catalysis depends on Asp316, which acts as the Proton acceptor. The phosphoenolpyruvate site is built by Arg347, Arg390, and Lys416.

It belongs to the EPSP synthase family. In terms of assembly, monomer.

Its subcellular location is the cytoplasm. The enzyme catalyses 3-phosphoshikimate + phosphoenolpyruvate = 5-O-(1-carboxyvinyl)-3-phosphoshikimate + phosphate. It functions in the pathway metabolic intermediate biosynthesis; chorismate biosynthesis; chorismate from D-erythrose 4-phosphate and phosphoenolpyruvate: step 6/7. Catalyzes the transfer of the enolpyruvyl moiety of phosphoenolpyruvate (PEP) to the 5-hydroxyl of shikimate-3-phosphate (S3P) to produce enolpyruvyl shikimate-3-phosphate and inorganic phosphate. This chain is 3-phosphoshikimate 1-carboxyvinyltransferase, found in Deinococcus geothermalis (strain DSM 11300 / CIP 105573 / AG-3a).